A 371-amino-acid polypeptide reads, in one-letter code: MFKRETKDFINIDPLQTGGKLTEEARQALLEWGDGYSVCDFCTTGRLDEIKTPPIHDFIHNQLPKFLGCDVARVTNGAREAKFAVMHSLAKKDAWVVMDENCHYSSYVAAERAGLNIALVPKTDYPDYAITPENFAQTIEETKKRGEVVLALITYPDGNYGNLPDVKKIAKVCSEYDVPLLVNGAYAIGRMPVSLKEIGADFIVGSGHKSMAASGPIGVMGMKEEWAEIVLRRSEKYKNKEVELLGCTARGATIITLMASFPHVRERIKRWDEEVEKARRFAAEMEKLGIKQLGDNPHNHDLMFFHAEVLYEISKKAKGGRFFLYRELKSRKIHGIKPGLTRYFKLSTYGLSDEEVDYVLNAFKEIIEKYS.

Pyridoxal 5'-phosphate is bound by residues 78–79 (AR), asparagine 183, and 206–208 (SGH). Lysine 209 carries the post-translational modification N6-(pyridoxal phosphate)lysine.

It belongs to the SepCysS family. As to quaternary structure, homodimer. Probably interacts with SepRS. Pyridoxal 5'-phosphate is required as a cofactor.

It catalyses the reaction O-phospho-L-seryl-tRNA(Cys) + hydrogen sulfide + H(+) = L-cysteinyl-tRNA(Cys) + phosphate. Converts O-phospho-L-seryl-tRNA(Cys) (Sep-tRNA(Cys)) to L-cysteinyl-tRNA(Cys) (Cys-tRNA(Cys)). The chain is O-phospho-L-seryl-tRNA:Cys-tRNA synthase 1 from Archaeoglobus fulgidus (strain ATCC 49558 / DSM 4304 / JCM 9628 / NBRC 100126 / VC-16).